The following is a 370-amino-acid chain: Prolactin-releasing peptide receptor (370 aa).

The disordered stretch occupies residues 1–34 (MTSLPPGTTGDPDLFSGPSPAGSTPANQSAEASE). Topologically, residues 1 to 62 (MTSLPPGTTG…LQLVHQLKGL (62 aa)) are extracellular. Residues 21–34 (AGSTPANQSAEASE) show a composition bias toward polar residues. 2 N-linked (GlcNAc...) asparagine glycosylation sites follow: Asn-27 and Asn-36. Residues 63 to 83 (IVMLYSIVVVVGLVGNCLLVL) traverse the membrane as a helical segment. The Cytoplasmic segment spans residues 84-101 (VIARVRRLHNVTNFLIGN). The chain crosses the membrane as a helical span at residues 102–122 (LALSDVLMCAACVPLTLAYAF). The Extracellular segment spans residues 123–126 (EPRG). The chain crosses the membrane as a helical span at residues 127-147 (WVFGGGLCHLVFFLQPVTVYV). The cysteines at positions 134 and 211 are disulfide-linked. At 148–175 (SVFTLTTIAVDRYVVLVHPLRRRISLKL) the chain is on the cytoplasmic side. The chain crosses the membrane as a helical span at residues 176-196 (SAYAVLGIWALSAVLALPAAV). Over 197–223 (HTYHVELKPHDVRLCEEFWGSQERQRQ) the chain is Extracellular. The helical transmembrane segment at 224 to 244 (IYAWGLLLGTYLLPLLAILLS) threads the bilayer. Over 245–276 (YVRVSVKLRNRVVPGSVTQSQADWDRARRRRT) the chain is Cytoplasmic. Residues 277-297 (FCLLVVVVVVFALCWLPLHIF) traverse the membrane as a helical segment. Over 298–317 (NLLRDLDPRAIDPYAFGLVQ) the chain is Extracellular. The chain crosses the membrane as a helical span at residues 318–338 (LLCHWLAMSSACYNPFIYAWL). Residues 339–370 (HDSFREELRKMLLSWPRKIVPHGQNMTVSVVI) lie on the Cytoplasmic side of the membrane. The tract at residues 365-370 (TVSVVI) is required for interaction with GRIP1, GRIP2 and PICK1.

It belongs to the G-protein coupled receptor 1 family. In terms of assembly, interacts through its C-terminal region with the PDZ domain-containing proteins GRIP1, GRIP2 and PICK1. Interacts with PDZ domains 4 and 5 of GRIP1 and with the PDZ domain of PICK1. In terms of tissue distribution, widely expressed, with highest levels in pituitary, cerebellum, and hypothalamus.

It localises to the cell membrane. Receptor for prolactin-releasing peptide (PrRP). Implicated in lactation, regulation of food intake and pain-signal processing. The polypeptide is Prolactin-releasing peptide receptor (Prlhr) (Rattus norvegicus (Rat)).